A 726-amino-acid chain; its full sequence is ORC ubiquitin ligase 1 (726 aa).

Residues 18–56 (CHICLGKVRQPVICINNHVFCSICIDLWLKNNSQCPACR) form an RING-type; degenerate zinc finger. Coiled-coil stretches lie at residues 87 to 129 (LRKT…TILD) and 155 to 270 (ETVA…MNSI). Residue Ser210 is modified to Phosphoserine. A disordered region spans residues 274–335 (ALPADGKGSK…ARQESTSKAE (62 aa)). Positions 280 to 290 (KGSKGSEEDVA) are enriched in basic and acidic residues. Residues 300–320 (KQPSSSTSSSSHLAKPSSSRL) show a composition bias toward low complexity. Residues 321–334 (CDTSSARQESTSKA) show a composition bias toward polar residues. 7 positions are modified to phosphoserine: Ser526, Ser553, Ser561, Ser568, Ser570, Ser719, and Ser721. Residues 687–726 (QSPWSTSFVPEKRNKNVNQSTKRKIQSSLSNASPSKATKS) are disordered. Residues 702–726 (NVNQSTKRKIQSSLSNASPSKATKS) are compositionally biased toward polar residues.

Associates with ORC complex. Binds to chromatin; association is cell cycle-regulated, absent from mitotic chromosomes, is associated with chromatin from G1 and partially released from chromatin from mid S-phase. Post-translationally, auto-ubiquitinated.

Its subcellular location is the chromosome. It carries out the reaction S-ubiquitinyl-[E2 ubiquitin-conjugating enzyme]-L-cysteine + [acceptor protein]-L-lysine = [E2 ubiquitin-conjugating enzyme]-L-cysteine + N(6)-ubiquitinyl-[acceptor protein]-L-lysine.. Functionally, E3 ubiquitin ligase essential for DNA replication origin activation during S phase. Acts as a replication origin selector which selects the origins to be fired and catalyzes the multi-mono-ubiquitination of a subset of chromatin-bound ORC3 and ORC5 during S-phase. This Pongo abelii (Sumatran orangutan) protein is ORC ubiquitin ligase 1 (OBI1).